The following is a 673-amino-acid chain: Probable serine/threonine-protein kinase SCO3848 (673 aa).

A Protein kinase domain is found at 11 to 277 (YELGPVLGRG…EMRVDIEACL (267 aa)). ATP is bound by residues 17-25 (LGRGGMAEV) and Lys-40. Asp-138 (proton acceptor) is an active-site residue. The tract at residues 302-345 (DQPTTALRSDGGGGATTMLPPMNPDDGGYGYDERPDRRRQQPRK) is disordered. PASTA domains follow at residues 379-445 (GNDK…VVST), 446-511 (GAPK…EVAK), 512-580 (AEEK…VVGK), and 581-649 (AVEK…MTVP). The tract at residues 472–500 (FEVETKQTESSQDEGTILSQNPDPGKELE) is disordered. Residues 479–493 (TESSQDEGTILSQNP) are compositionally biased toward polar residues. Disordered regions lie at residues 613-641 (AQGS…PAAT) and 653-673 (GNGN…GFGD).

It belongs to the protein kinase superfamily. Ser/Thr protein kinase family.

The enzyme catalyses L-seryl-[protein] + ATP = O-phospho-L-seryl-[protein] + ADP + H(+). The catalysed reaction is L-threonyl-[protein] + ATP = O-phospho-L-threonyl-[protein] + ADP + H(+). This chain is Probable serine/threonine-protein kinase SCO3848, found in Streptomyces coelicolor (strain ATCC BAA-471 / A3(2) / M145).